The sequence spans 930 residues: Protein translocase subunit SecA (930 aa).

Residues glutamine 87, 105–109 (GEGKT), and aspartate 515 each bind ATP. Residues cysteine 914, cysteine 916, cysteine 925, and histidine 926 each coordinate Zn(2+).

This sequence belongs to the SecA family. As to quaternary structure, monomer and homodimer. Part of the essential Sec protein translocation apparatus which comprises SecA, SecYEG and auxiliary proteins SecDF-YajC and YidC. The cofactor is Zn(2+).

It localises to the cell inner membrane. The protein localises to the cytoplasm. It carries out the reaction ATP + H2O + cellular proteinSide 1 = ADP + phosphate + cellular proteinSide 2.. Its function is as follows. Part of the Sec protein translocase complex. Interacts with the SecYEG preprotein conducting channel. Has a central role in coupling the hydrolysis of ATP to the transfer of proteins into and across the cell membrane, serving both as a receptor for the preprotein-SecB complex and as an ATP-driven molecular motor driving the stepwise translocation of polypeptide chains across the membrane. The chain is Protein translocase subunit SecA from Burkholderia thailandensis (strain ATCC 700388 / DSM 13276 / CCUG 48851 / CIP 106301 / E264).